The chain runs to 300 residues: MNTLVLKIDAILSKHLKKQLAPYTISSQNIYVAFAAKKNGVTVLLYKSGKLVLQGNGANALAQELNLPVAKTVFEASNNSQDIPIIGSDEVGNGSYFGGIAVVASFVDPKDHPFLKKLGVDDSKKLSDKTIQQIAPLLEKQIPHQSLLLSPKKYNELVGKSKPYNTISIKVALHNQAIFLLLQKGIQPKQIVIDAFTSQSNYEKHLKKEKNHFPNPLTFQEKAESHYLAVAVSSIIARNLFLDNLDQLGQDLGYQLPSGAGSASDKVASQLLAAYGMSSLEYSAKLHFANTHKAQALLTK.

The RNase H type-2 domain occupies 83 to 300 (IPIIGSDEVG…THKAQALLTK (218 aa)). Residues Asp-89, Glu-90, and Asp-194 each coordinate a divalent metal cation.

This sequence belongs to the RNase HII family. RnhC subfamily. Mn(2+) is required as a cofactor. It depends on Mg(2+) as a cofactor.

It localises to the cytoplasm. It catalyses the reaction Endonucleolytic cleavage to 5'-phosphomonoester.. Functionally, endonuclease that specifically degrades the RNA of RNA-DNA hybrids. The sequence is that of Ribonuclease HIII from Streptococcus pyogenes serotype M28 (strain MGAS6180).